A 105-amino-acid chain; its full sequence is Met repressor (105 aa).

This sequence belongs to the MetJ family. Homodimer.

It is found in the cytoplasm. Its function is as follows. This regulatory protein, when combined with SAM (S-adenosylmethionine) represses the expression of the methionine regulon and of enzymes involved in SAM synthesis. This is Met repressor from Erwinia tasmaniensis (strain DSM 17950 / CFBP 7177 / CIP 109463 / NCPPB 4357 / Et1/99).